The chain runs to 305 residues: NAD kinase (305 aa).

The active-site Proton acceptor is the Asp82. Residues Asp82–Gly83, Asn156–Asp157, Arg184, Asp186, Thr197–Ser202, Ala221, and Gln255 each bind NAD(+).

The protein belongs to the NAD kinase family. Requires a divalent metal cation as cofactor.

It localises to the cytoplasm. The enzyme catalyses NAD(+) + ATP = ADP + NADP(+) + H(+). Its function is as follows. Involved in the regulation of the intracellular balance of NAD and NADP, and is a key enzyme in the biosynthesis of NADP. Catalyzes specifically the phosphorylation on 2'-hydroxyl of the adenosine moiety of NAD to yield NADP. The chain is NAD kinase from Cupriavidus pinatubonensis (strain JMP 134 / LMG 1197) (Cupriavidus necator (strain JMP 134)).